Consider the following 424-residue polypeptide: Tyrosine--tRNA ligase (424 aa).

Tyrosine 37 contributes to the L-tyrosine binding site. Positions 42–51 (PTADSLHLGH) match the 'HIGH' region motif. Tyrosine 174 and glutamine 178 together coordinate L-tyrosine. The 'KMSKS' region signature appears at 234 to 238 (KFGKT). Lysine 237 serves as a coordination point for ATP. The S4 RNA-binding domain occupies 357–414 (TGLIDALVASGLAKSKSEARTFIQSGSVAINGNKAEALDHAIGGDELLYGRFTILRRG).

Belongs to the class-I aminoacyl-tRNA synthetase family. TyrS type 1 subfamily. Homodimer.

The protein localises to the cytoplasm. The catalysed reaction is tRNA(Tyr) + L-tyrosine + ATP = L-tyrosyl-tRNA(Tyr) + AMP + diphosphate + H(+). Functionally, catalyzes the attachment of tyrosine to tRNA(Tyr) in a two-step reaction: tyrosine is first activated by ATP to form Tyr-AMP and then transferred to the acceptor end of tRNA(Tyr). The sequence is that of Tyrosine--tRNA ligase from Dechloromonas aromatica (strain RCB).